A 392-amino-acid chain; its full sequence is Monooxygenase AgnR1 (392 aa).

Residues 1 to 20 (MSAPQKCAAVVVGAGPAGLA) form the signal peptide. Residue N134 is glycosylated (N-linked (GlcNAc...) asparagine).

Its function is as follows. Monooxygenase; part of the gene cluster that mediates the biosynthesis of agnestins, dihydroxy-xanthone metabolites. The pathway begins with the assembly and cyclization of atrochrysone thioester by the non-reducing polyketide synthase Agnpks1. The atrochrysone carboxyl ACP thioesterase AgnL7 then breaks the thioester bond and releases the atrochrysone carboxylic acid as the first enzyme-free intermediate. The decarboxylase AgnL1 then catalyzes the concerted decarboxylation-elimination required to convert atochrysone carboxylic acid into emodin anthrone, which is further oxidized to emodin by the anthrone oxygenase AgnL2. Emodin then undergoes reduction catalyzed by the oxidoreductase AgnL4 to yield the dihydroquinone tautomer which is the substrate for reduction by the short chain dehydrogenase AgnL6 reduction to produce hydroxyketone, followed by AgnL8 dehydration and likely spontaneous autoxidation to chrysophanol. Baeyer-Villiger oxidation by the oxidase AgnL3 leads to monodictyphenone via cleavage of the C-10/C-10a bond of chrysophanol. Alternative cleavage at the C-4a/C-10 bond of chrysophanol also leads to the formation some cephalone F. Further conversion to agnestins A and B, requires reduction to dihydro-monodictyphenone, oxidation to agnestin C probably via an epoxide, and rearrangement to either agnestin A or agnestin B directly, although agnestin A or agnestin B can also interconvert. Within the cluster, AgnR1 is the only unassigned oxidoreductase present which could be involved in this conversion. However, AgnR1 seems not to be involved in this step, and thus genes involved in the proposed oxidation/reduction may be located elsewhere on the genome. Further agnestin A derivatives are probably formed by spontaneous decarboxylations, dehydrations and methanolysis reactions. The chain is Monooxygenase AgnR1 from Paecilomyces divaricatus (Penicillium divaricatum).